A 219-amino-acid chain; its full sequence is Small ribosomal subunit protein uS3c (219 aa).

One can recognise a KH type-2 domain in the interval 47–118 (IRNHVRNSSN…KLRMTLVEVL (72 aa)).

It belongs to the universal ribosomal protein uS3 family. In terms of assembly, part of the 30S ribosomal subunit.

The protein resides in the plastid. It is found in the chloroplast. This Chara vulgaris (Common stonewort) protein is Small ribosomal subunit protein uS3c (rps3).